We begin with the raw amino-acid sequence, 251 residues long: tRNA1(Val) (adenine(37)-N6)-methyltransferase (251 aa).

It belongs to the methyltransferase superfamily. tRNA (adenine-N(6)-)-methyltransferase family.

It localises to the cytoplasm. It catalyses the reaction adenosine(37) in tRNA1(Val) + S-adenosyl-L-methionine = N(6)-methyladenosine(37) in tRNA1(Val) + S-adenosyl-L-homocysteine + H(+). Functionally, specifically methylates the adenine in position 37 of tRNA(1)(Val) (anticodon cmo5UAC). The protein is tRNA1(Val) (adenine(37)-N6)-methyltransferase of Yersinia enterocolitica serotype O:8 / biotype 1B (strain NCTC 13174 / 8081).